Consider the following 299-residue polypeptide: Homoserine O-acetyltransferase (299 aa).

Catalysis depends on C142, which acts as the Acyl-thioester intermediate. The substrate site is built by K163 and S192. H235 (proton acceptor) is an active-site residue. E237 is a catalytic residue. Residue R249 coordinates substrate.

It belongs to the MetA family.

The protein resides in the cytoplasm. The enzyme catalyses L-homoserine + acetyl-CoA = O-acetyl-L-homoserine + CoA. It functions in the pathway amino-acid biosynthesis; L-methionine biosynthesis via de novo pathway; O-acetyl-L-homoserine from L-homoserine: step 1/1. Its function is as follows. Transfers an acetyl group from acetyl-CoA to L-homoserine, forming acetyl-L-homoserine. The sequence is that of Homoserine O-acetyltransferase from Synechococcus elongatus (strain ATCC 33912 / PCC 7942 / FACHB-805) (Anacystis nidulans R2).